The following is a 454-amino-acid chain: B-cell lymphoma 3 protein (454 aa).

The disordered stretch occupies residues 1-50 (MPRCPAGAMDEGPVDLRTRPKAAGLPGAALPLRKRPLRAPSPEPAAPRGA). Positions 21–31 (KAAGLPGAALP) are enriched in low complexity. At Ser-41 the chain carries Phosphoserine. 7 ANK repeats span residues 134-163 (DGDTPLHIAVVQGNLPAVHRLVNLFQQGGR), 171-200 (LRQTPLHLAVITTLPSVVRLLVTAGASPMA), 204-235 (HGQTAAHLACEHRSPTCLRALLDSAAPGTLDL), 241-270 (DGLTALHVAVNTECQETVQLLLERGADIDA), 275-304 (SGRSPLIHAVENNSLSMVQLLLQHGANVNA), 308-337 (SGSSALHSASGRGLLPLVRTLVRSGADSSL), and 338-367 (KNCHNDTPLMVARSRRVIDILRGKATRPAS). The disordered stretch occupies residues 360–454 (GKATRPASTS…VPPSPAPGGS (95 aa)). Polar residues predominate over residues 365–381 (PASTSQPDPSPDRSANT). At Ser-374 the chain carries Phosphoserine. Residues 382-404 (SPESSSRLSSNGLLSASPSSSPS) show a composition bias toward low complexity. A phosphoserine; by GSK3 mark is found at Ser-402 and Ser-406. The span at 405-418 (QSPPRDPPGFPMAP) shows a compositional bias: pro residues. The segment covering 432–442 (LPFAGVLRGPG) has biased composition (low complexity). Pro residues predominate over residues 443-454 (RPVPPSPAPGGS).

Component of a complex consisting of the NF-kappa-B p52-p52 homodimer and BCL3. Component of a complex consisting of the NF-kappa-B p50-p50 homodimer and BCL3. Interacts with N4BP2, COPS5 and PIR. Interacts with CYLD. In terms of processing, polyubiquitinated. Ubiquitination via 'Lys-63'-linked ubiquitin chains is required for nuclear accumulation. Deubiquitinated by CYLD, which acts on 'Lys-63'-linked ubiquitin chains. Deubiquitination by CYLD prevents nuclear accumulation. Activated by phosphorylation.

It localises to the nucleus. It is found in the cytoplasm. The protein resides in the perinuclear region. In terms of biological role, contributes to the regulation of transcriptional activation of NF-kappa-B target genes. In the cytoplasm, inhibits the nuclear translocation of the NF-kappa-B p50 subunit. In the nucleus, acts as transcriptional activator that promotes transcription of NF-kappa-B target genes. Contributes to the regulation of cell proliferation. This Homo sapiens (Human) protein is B-cell lymphoma 3 protein (BCL3).